The following is a 23-amino-acid chain: Magainin-R1 (23 aa).

Expressed by the skin glands.

It localises to the secreted. In terms of biological role, antimicrobial peptide. This chain is Magainin-R1, found in Xenopus ruwenzoriensis (Uganda clawed frog).